The primary structure comprises 890 residues: Chloroquine resistance transporter (890 aa).

2 disordered regions span residues 1–163 and 280–300; these read MPPA…EAPL and GMQR…AAEG. Topologically, residues 1 to 349 are cytoplasmic; it reads MPPAHHGSGG…RATRWIDRNA (349 aa). Residues 8–19 show a composition bias toward basic residues; that stretch reads SGGRRRPGRGNK. Low complexity-rich tracts occupy residues 102–126 and 134–156; these read APSQ…SSRS and SPVA…TSAS. A helical membrane pass occupies residues 350–372; sequence ATVRVACYTFLLLVTSTGNTICF. Residues 373 to 391 are Vacuolar-facing; it reads KKMIDKMPNYSPCLTQVTT. The helical transmembrane segment at 392–412 threads the bilayer; that stretch reads VVFVPVFFALSLYTDYAGGLP. Residues 413 to 422 are Cytoplasmic-facing; that stretch reads QEMADFPKRN. Residues 423 to 443 form a helical membrane-spanning segment; that stretch reads FAVMGFLDSFSGVMAIIGAVH. The Vacuolar segment spans residues 444-447; the sequence is TTGT. Residues 448 to 468 form a helical membrane-spanning segment; sequence TQVVLQQSCIVFSLLASIVML. Residues 469 to 471 lie on the Cytoplasmic side of the membrane; sequence RKR. Residues 472-492 traverse the membrane as a helical segment; that stretch reads FHAAHYLGALVIILGVLVVKL. Over 493–505 the chain is Vacuolar; the sequence is PDLLHPSSDGGGD. A helical membrane pass occupies residues 506 to 526; the sequence is VFVFNLLYLLSNLPTAVSCVY. Topologically, residues 527-544 are cytoplasmic; the sequence is KEVAFRGVEMGTNYLQAW. A helical transmembrane segment spans residues 545–565; sequence VALFQFLIGFLVLPLNALPVL. At 566 to 614 the chain is on the vacuolar side; that stretch reads GPQRVPLAELPASLWNGTRCLFGFNTIVTNCGGAGNMESPCDNCEGAWK. A glycan (N-linked (GlcNAc...) asparagine) is linked at asparagine 581. 2 cysteine pairs are disulfide-bonded: cysteine 585-cysteine 609 and cysteine 596-cysteine 606. A helical membrane pass occupies residues 615–634; sequence YVGMYLSFNLLYNMFIIFVV. At 635–640 the chain is on the cytoplasmic side; that stretch reads KSGGAA. Residues 641–663 form a helical membrane-spanning segment; it reads LTFLVSTLRLPVTALAFCSRAIM. Topologically, residues 664-673 are vacuolar; that stretch reads GDRAVPPKAT. Residues 674–694 form a helical membrane-spanning segment; that stretch reads DFYGLLVLILGLVIYRAGGIM. Residues 695–890 are Cytoplasmic-facing; the sequence is KRRAQRRAVA…GKSRANNGCI (196 aa). The tract at residues 798–871 is disordered; that stretch reads AAFTPFTQRM…NRVGGYEPPS (74 aa).

The protein belongs to the CRT-like transporter family.

It is found in the vacuole membrane. Nutrient transporter. Involved in maintaining the osmotic homeostasis of the digestive vacuole. Required for the proper organization of the endolysosomal system and, in turn, indirectly for microneme secretion and parasite invasion. Required for bradyzoite viability and cyst development. The polypeptide is Chloroquine resistance transporter (Toxoplasma gondii).